Reading from the N-terminus, the 356-residue chain is Dynein regulatory complex protein 10 (356 aa).

The stretch at 126 to 167 (SNREFFEEVRDREERAVAEQEQLKQKLKLQRVELQKAAGTIQ) forms a coiled coil. Positions 173–209 (ARGEVSEVQSSTQQSRAAIEGSARAQSEADKSSFQSD) are disordered. A compositionally biased stretch (low complexity) spans 178-187 (SEVQSSTQQS). Residues 197-287 (AQSEADKSSF…LRQLQEYNSG (91 aa)) adopt a coiled-coil conformation. The IQ domain occupies 319-348 (QNHAARVIQSYWRGFKKAREAAKKKAKKLE).

The protein belongs to the DRC10 family. In terms of assembly, component of the nexin-dynein regulatory complex (N-DRC).

Its subcellular location is the cytoplasm. It localises to the cytoskeleton. It is found in the flagellum axoneme. Functionally, component of the nexin-dynein regulatory complex (N-DRC), a key regulator of ciliary/flagellar motility which maintains the alignment and integrity of the distal axoneme and regulates microtubule sliding in motile axonemes. The sequence is that of Dynein regulatory complex protein 10 from Chlamydomonas reinhardtii (Chlamydomonas smithii).